We begin with the raw amino-acid sequence, 260 residues long: Protein-L-isoaspartate O-methyltransferase (260 aa).

Positions 1–27 (MKSPVAGAVLDPSTPPPTTGTSWRWPG) are disordered. Serine 92 is a catalytic residue.

The protein belongs to the methyltransferase superfamily. L-isoaspartyl/D-aspartyl protein methyltransferase family.

The protein localises to the cytoplasm. The enzyme catalyses [protein]-L-isoaspartate + S-adenosyl-L-methionine = [protein]-L-isoaspartate alpha-methyl ester + S-adenosyl-L-homocysteine. Catalyzes the methyl esterification of L-isoaspartyl residues in peptides and proteins that result from spontaneous decomposition of normal L-aspartyl and L-asparaginyl residues. It plays a role in the repair and/or degradation of damaged proteins. This chain is Protein-L-isoaspartate O-methyltransferase (pcm), found in Aeropyrum pernix (strain ATCC 700893 / DSM 11879 / JCM 9820 / NBRC 100138 / K1).